The following is a 202-amino-acid chain: LexA repressor 2 (202 aa).

Positions 28–48 form a DNA-binding region, H-T-H motif; the sequence is LADIATRFGFASRSVARKHIT. Active-site for autocatalytic cleavage activity residues include S123 and K160.

This sequence belongs to the peptidase S24 family. Homodimer.

The enzyme catalyses Hydrolysis of Ala-|-Gly bond in repressor LexA.. Its function is as follows. Represses a number of genes involved in the response to DNA damage (SOS response), including recA and lexA. In the presence of single-stranded DNA, RecA interacts with LexA causing an autocatalytic cleavage which disrupts the DNA-binding part of LexA, leading to derepression of the SOS regulon and eventually DNA repair. This is LexA repressor 2 from Pseudomonas putida (strain ATCC 47054 / DSM 6125 / CFBP 8728 / NCIMB 11950 / KT2440).